The chain runs to 433 residues: Probable M18 family aminopeptidase 2 (433 aa).

3 residues coordinate Zn(2+): His-84, His-161, and His-409.

It belongs to the peptidase M18 family. Requires Zn(2+) as cofactor.

The chain is Probable M18 family aminopeptidase 2 (apeB) from Clostridium acetobutylicum (strain ATCC 824 / DSM 792 / JCM 1419 / IAM 19013 / LMG 5710 / NBRC 13948 / NRRL B-527 / VKM B-1787 / 2291 / W).